The chain runs to 462 residues: Transcription initiation factor TFIID subunit 7-like (462 aa).

2 disordered regions span residues 1–97 and 327–366; these read MECP…VPDE and DSRS…SEEY. Composition is skewed to low complexity over residues 16–30 and 66–77; these read STPT…SQQE and DADSSAQAAAQA. A compositionally biased stretch (acidic residues) spans 333–365; it reads DDDEDEDDEDEDEDEDEDEDEDKEEEEEDCSEE. Residues 342 to 462 adopt a coiled-coil conformation; it reads DEDEDEDEDE…QEQLQRFLKK (121 aa).

This sequence belongs to the TAF7 family. In terms of assembly, TFIID is composed of TATA binding protein (TBP) and a number of TBP-associated factors (TAFs). TAF7L may replace TAF7 in a spermatogenesis-specific form of TFIID. Interacts with TBP; the interaction occurs in a sub-population of cells (pachytene and haploid round spermatids) and is developmentally regulated through differential intracellular localization of the two proteins. Interacts with TAF1. As to expression, testis-specific.

The protein localises to the nucleus. The protein resides in the cytoplasm. Functionally, probably functions as a spermatogenesis-specific component of the DNA-binding general transcription factor complex TFIID, a multimeric protein complex that plays a central role in mediating promoter responses to various activators and repressors. May play a role in spermatogenesis. This chain is Transcription initiation factor TFIID subunit 7-like (TAF7L), found in Homo sapiens (Human).